The sequence spans 338 residues: UDP-3-O-acylglucosamine N-acyltransferase (338 aa).

The active-site Proton acceptor is histidine 239.

Belongs to the transferase hexapeptide repeat family. LpxD subfamily. Homotrimer.

It carries out the reaction a UDP-3-O-[(3R)-3-hydroxyacyl]-alpha-D-glucosamine + a (3R)-hydroxyacyl-[ACP] = a UDP-2-N,3-O-bis[(3R)-3-hydroxyacyl]-alpha-D-glucosamine + holo-[ACP] + H(+). It participates in bacterial outer membrane biogenesis; LPS lipid A biosynthesis. In terms of biological role, catalyzes the N-acylation of UDP-3-O-acylglucosamine using 3-hydroxyacyl-ACP as the acyl donor. Is involved in the biosynthesis of lipid A, a phosphorylated glycolipid that anchors the lipopolysaccharide to the outer membrane of the cell. In Xylella fastidiosa (strain 9a5c), this protein is UDP-3-O-acylglucosamine N-acyltransferase.